The following is a 397-amino-acid chain: Phosphoglycerate kinase (397 aa).

Substrate-binding positions include Asp21–Asn23, Arg37, His60–Arg63, Arg119, and Arg152. ATP-binding positions include Lys203, Gly294, Glu325, and Gly354–Ser357.

This sequence belongs to the phosphoglycerate kinase family. Monomer.

The protein localises to the cytoplasm. The enzyme catalyses (2R)-3-phosphoglycerate + ATP = (2R)-3-phospho-glyceroyl phosphate + ADP. It functions in the pathway carbohydrate degradation; glycolysis; pyruvate from D-glyceraldehyde 3-phosphate: step 2/5. The sequence is that of Phosphoglycerate kinase from Chlorobium limicola (strain DSM 245 / NBRC 103803 / 6330).